Consider the following 114-residue polypeptide: Iron-sulfur cluster insertion protein ErpA (114 aa).

Iron-sulfur cluster is bound by residues Cys-42, Cys-106, and Cys-108.

This sequence belongs to the HesB/IscA family. As to quaternary structure, homodimer. Iron-sulfur cluster is required as a cofactor.

In terms of biological role, required for insertion of 4Fe-4S clusters for at least IspG. The polypeptide is Iron-sulfur cluster insertion protein ErpA (Shigella boydii serotype 18 (strain CDC 3083-94 / BS512)).